The chain runs to 349 residues: Mediator of RNA polymerase II transcription subunit 19 (349 aa).

Positions 1 to 28 (MSFHPQTPQSPSHFSPSSSDQSTSMSGS) are enriched in low complexity. 2 disordered regions span residues 1-81 (MSFH…EQKK) and 238-349 (AHLN…VSGI). Residues 29–53 (IVSTTTTLPTPAHSVNGSSLANDMS) show a composition bias toward polar residues. Positions 70–81 (TSDDVGDREQKK) are enriched in basic and acidic residues. A compositionally biased stretch (low complexity) spans 330 to 341 (QSYAQARQQSSY).

Belongs to the Mediator complex subunit 19 family. As to quaternary structure, component of the Mediator complex.

It is found in the nucleus. In terms of biological role, component of the Mediator complex, a coactivator involved in the regulated transcription of nearly all RNA polymerase II-dependent genes. Mediator functions as a bridge to convey information from gene-specific regulatory proteins to the basal RNA polymerase II transcription machinery. Mediator is recruited to promoters by direct interactions with regulatory proteins and serves as a scaffold for the assembly of a functional preinitiation complex with RNA polymerase II and the general transcription factors. This chain is Mediator of RNA polymerase II transcription subunit 19 (rox3), found in Neurospora crassa (strain ATCC 24698 / 74-OR23-1A / CBS 708.71 / DSM 1257 / FGSC 987).